The chain runs to 268 residues: Serine/arginine-rich splicing factor SR30 (268 aa).

RRM domains follow at residues 7–82 (RTIY…IAHG) and 109–187 (YRVL…EYES). Residues 186–199 (ESRSVSRSPDDSKS) show a composition bias toward basic and acidic residues. The interval 186–268 (ESRSVSRSPD…NSPVSPVISG (83 aa)) is disordered. A phosphoserine mark is found at Ser-193, Ser-210, Ser-212, Ser-214, Ser-219, Ser-221, Ser-227, Ser-236, Ser-246, Ser-256, and Ser-260. Over residues 207–247 (RGPSCSYSSKSRSVSPARSISPRSRPLSRSRSLYSSVSRSQ) the composition is skewed to low complexity. Residues 257–268 (RSNSPVSPVISG) show a composition bias toward low complexity.

The protein belongs to the splicing factor SR family. SR subfamily. As to quaternary structure, component of the spliceosome. Interacts with SNRNP35, CYP59 and CYP63. Phosphorylated. In terms of tissue distribution, ubiquitous.

It is found in the nucleus speckle. It localises to the nucleus. Its subcellular location is the nucleoplasm. The protein resides in the cytoplasm. In terms of biological role, regulatory splicing factor that modulates alternative splicing and gene expression in specific cell types. Autoregulates its own expression. Probably involved in intron recognition and spliceosome assembly. The protein is Serine/arginine-rich splicing factor SR30 (SR30) of Arabidopsis thaliana (Mouse-ear cress).